The sequence spans 115 residues: Photosystem II reaction center Psb28 protein (115 aa).

It belongs to the Psb28 family. As to quaternary structure, part of the photosystem II complex.

It localises to the plastid. The protein resides in the chloroplast thylakoid membrane. The protein is Photosystem II reaction center Psb28 protein of Trieres chinensis (Marine centric diatom).